The following is a 438-amino-acid chain: Sphingomyelinase phosphodiesterase D (438 aa).

Residues 1 to 17 (MKIILILVLVLVVSINA) form the signal peptide. D27 and H29 together coordinate Zn(2+). N-linked (GlcNAc...) asparagine glycosylation occurs at N40. D111 and N148 together coordinate Zn(2+). N160 carries N-linked (GlcNAc...) asparagine glycosylation. A Zn(2+)-binding site is contributed by H247. Residue N271 is glycosylated (N-linked (GlcNAc...) asparagine). H287 and H289 together coordinate Zn(2+). N338 and N359 each carry an N-linked (GlcNAc...) asparagine glycan.

This sequence belongs to the acid sphingomyelinase family. It depends on Zn(2+) as a cofactor.

It is found in the secreted. The chain is Sphingomyelinase phosphodiesterase D (sgmD) from Dictyostelium discoideum (Social amoeba).